An 831-amino-acid chain; its full sequence is MPLEMEPKMSKLAFGCQRSSTSDDDSGCALEEYAWVPPGLRPEQIQLYFACLPEEKVPYVNSPGEKHRIKQLLYQLPPHDNEVRYCQSLSEEEKKELQVFSAQRKKEALGRGTIKLLSRAMMHAVCEQCGLQMNGGEVAVFASRAGPGVCWRPSCFVCFTCNELLVDLIYFYQDGKIHCGRHHAELLKPRCSACDEIIFADECTEAEGRHWHMKHFCCLECETVLGGQRYIMKDGRPFCCGCFESLYAEYCETCGEHIGVDHAQMTYDGQHWHATEACFSCAQCKASLLGCPFLPKQGQIYCSKTCSLGEDIHASDSSDSAFQSARSRDSRRSVRMGRSSRSADQCRQSLLLSPALNYKFPGLSGSADDTLSRKLDDVSLSGQGAGFAHEEFWKARVDQEASEDPEEWAEHEDYMTQLLLKFGDKNLFQQPPSEVDMRASEHWIPDNMVTNKPEAKQNHQSLASKKYQSDMYWAQSQDGLGDSAYGSHPGPASSRRLQELDLDHGAAGYNHDQTQWYEDSLECLSDLKPEQSVRDSMDSLALSNITGASVDGESKPRPSLYSLQNFEEIEAEDCEKMSNMGTLNSSMLHRSAESLKSLNSELCPEKIIPEEKPVHLPVLRRSKSQSRPQQVKFSDDVIDNGSYDIEIRQPPMSERTRRRVYHFEERGSRPHHHRHRRSRKSRSDNALNLVTERKYSAKDRLRLYTPDNYEKFIQSKGARELQAYMQNANLYGQYAHTTSDYALQNPGMTRFLGLYGDDDDSWCSSSTSSSDSEEEGYFLGQPIPQPRPQRFTYYTDDLSSPASALPTPQFNQRTTKSKKKKGHRGKNCIIS.

The PET domain maps to 14–122; the sequence is FGCQRSSTSD…TIKLLSRAMM (109 aa). 3 LIM zinc-binding domains span residues 124-189, 189-249, and 249-313; these read AVCE…LLKP, PRCS…LYAE, and EYCE…EDIH. The disordered stretch occupies residues 314–346; that stretch reads ASDSSDSAFQSARSRDSRRSVRMGRSSRSADQC. Phosphoserine is present on residues Ser315, Ser591, and Ser594. 2 disordered regions span residues 664 to 688 and 763 to 831; these read EERGSRPHHHRHRRSRKSRSDNALN and CSSS…CIIS. Positions 669 to 680 are enriched in basic residues; it reads RPHHHRHRRSRK. Ser683 is subject to Phosphoserine. A compositionally biased stretch (polar residues) spans 797 to 812; sequence DLSSPASALPTPQFNQ. A compositionally biased stretch (basic residues) spans 815–831; that stretch reads TKSKKKKGHRGKNCIIS. Cys828 carries the post-translational modification Cysteine methyl ester. A lipid anchor (S-farnesyl cysteine) is attached at Cys828. A propeptide spans 829–831 (removed in mature form); sequence IIS.

This sequence belongs to the prickle / espinas / testin family. Interacts with REST.

The protein localises to the nucleus membrane. It is found in the cytoplasm. It localises to the cytosol. Its function is as follows. Involved in the planar cell polarity pathway that controls convergent extension during gastrulation and neural tube closure. Convergent extension is a complex morphogenetic process during which cells elongate, move mediolaterally, and intercalate between neighboring cells, leading to convergence toward the mediolateral axis and extension along the anteroposterior axis. Necessary for nuclear localization of REST. May serve as nuclear receptor. The polypeptide is Prickle-like protein 1 (Prickle1) (Rattus norvegicus (Rat)).